The chain runs to 589 residues: Coronatine-insensitive protein homolog 2 (589 aa).

The 42-residue stretch at 18-59 folds into the F-box domain; sequence IPDVALGLVMGFVEDPWDRDAISLVCRHWCRVDALSRKHVTV. Residues Arg-87, Arg-352, Arg-414, and Arg-501 each coordinate jasmonate.

Interacts with TIFY9/JAZ5, TIFY11C/JAZ11 and TIFY11D/JAZ12 in a coronatine-dependent manner.

Its function is as follows. Involved in jasmonate (JA) signaling. Required for jasmonate signaling in plant defense responses. Component of SCF(COI1) E3 ubiquitin ligase complexes, which may mediate the ubiquitination and subsequent proteasomal degradation of target proteins, including TIFY/JAZ family. This Oryza sativa subsp. indica (Rice) protein is Coronatine-insensitive protein homolog 2.